The following is a 424-amino-acid chain: Elongation factor 1-alpha (424 aa).

A tr-type G domain is found at Lys-5–Ile-223. Residues Gly-14–Ser-21 are G1. Gly-14–Ser-21 contacts GTP. Residue Ser-21 participates in Mg(2+) binding. Positions Gly-70–Asp-74 are G2. Residues Asp-91–Gly-94 are G3. GTP-binding positions include Asp-91 to His-95 and Asn-148 to Asp-151. The tract at residues Asn-148–Asp-151 is G4. The G5 stretch occupies residues Ser-187 to Tyr-189.

This sequence belongs to the TRAFAC class translation factor GTPase superfamily. Classic translation factor GTPase family. EF-Tu/EF-1A subfamily.

It is found in the cytoplasm. The enzyme catalyses GTP + H2O = GDP + phosphate + H(+). Its function is as follows. GTP hydrolase that promotes the GTP-dependent binding of aminoacyl-tRNA to the A-site of ribosomes during protein biosynthesis. This Thermoplasma volcanium (strain ATCC 51530 / DSM 4299 / JCM 9571 / NBRC 15438 / GSS1) protein is Elongation factor 1-alpha.